The primary structure comprises 396 residues: L-lactate dehydrogenase (396 aa).

The region spanning 1–380 (MIISAASDYR…TQDSLVQGLG (380 aa)) is the FMN hydroxy acid dehydrogenase domain. Tyr-24 lines the substrate pocket. FMN is bound by residues Ser-106 and Gln-127. Substrate is bound at residue Tyr-129. Thr-155 provides a ligand contact to FMN. Arg-164 serves as a coordination point for substrate. Lys-251 provides a ligand contact to FMN. His-275 serves as the catalytic Proton acceptor. Arg-278 is a binding site for substrate. 306–330 (DSGIRNGLDVVRMIALGADTVLLGR) contributes to the FMN binding site.

This sequence belongs to the FMN-dependent alpha-hydroxy acid dehydrogenase family. The cofactor is FMN.

It localises to the cell inner membrane. The catalysed reaction is (S)-lactate + A = pyruvate + AH2. Its function is as follows. Catalyzes the conversion of L-lactate to pyruvate. Is coupled to the respiratory chain. The protein is L-lactate dehydrogenase of Shigella boydii serotype 4 (strain Sb227).